Here is a 1215-residue protein sequence, read N- to C-terminus: DNA-directed RNA polymerase subunit beta' (1215 aa).

The Zn(2+) site is built by Cys-60, Cys-62, Cys-75, and Cys-78. Mg(2+) is bound by residues Asp-450, Asp-452, and Asp-454. Positions 819, 893, 900, and 903 each coordinate Zn(2+).

The protein belongs to the RNA polymerase beta' chain family. As to quaternary structure, the RNAP catalytic core consists of 2 alpha, 1 beta, 1 beta' and 1 omega subunit. When a sigma factor is associated with the core the holoenzyme is formed, which can initiate transcription. Mg(2+) is required as a cofactor. The cofactor is Zn(2+).

It carries out the reaction RNA(n) + a ribonucleoside 5'-triphosphate = RNA(n+1) + diphosphate. DNA-dependent RNA polymerase catalyzes the transcription of DNA into RNA using the four ribonucleoside triphosphates as substrates. This is DNA-directed RNA polymerase subunit beta' from Levilactobacillus brevis (strain ATCC 367 / BCRC 12310 / CIP 105137 / JCM 1170 / LMG 11437 / NCIMB 947 / NCTC 947) (Lactobacillus brevis).